Reading from the N-terminus, the 248-residue chain is UDP-2,3-diacylglucosamine hydrolase (248 aa).

Mn(2+)-binding residues include Asp-8, His-10, Asp-41, Asn-79, and His-114. 79 to 80 (NR) provides a ligand contact to substrate. Residues Asp-122, Ser-160, Asp-171, Gln-174, and His-202 each coordinate substrate. Residues His-202 and His-204 each coordinate Mn(2+).

It belongs to the LpxH family. Mn(2+) serves as cofactor.

Its subcellular location is the cell inner membrane. It carries out the reaction UDP-2-N,3-O-bis[(3R)-3-hydroxytetradecanoyl]-alpha-D-glucosamine + H2O = 2-N,3-O-bis[(3R)-3-hydroxytetradecanoyl]-alpha-D-glucosaminyl 1-phosphate + UMP + 2 H(+). The protein operates within glycolipid biosynthesis; lipid IV(A) biosynthesis; lipid IV(A) from (3R)-3-hydroxytetradecanoyl-[acyl-carrier-protein] and UDP-N-acetyl-alpha-D-glucosamine: step 4/6. Functionally, hydrolyzes the pyrophosphate bond of UDP-2,3-diacylglucosamine to yield 2,3-diacylglucosamine 1-phosphate (lipid X) and UMP by catalyzing the attack of water at the alpha-P atom. Involved in the biosynthesis of lipid A, a phosphorylated glycolipid that anchors the lipopolysaccharide to the outer membrane of the cell. This is UDP-2,3-diacylglucosamine hydrolase from Stenotrophomonas maltophilia (strain K279a).